We begin with the raw amino-acid sequence, 461 residues long: Fumarate hydratase class II (461 aa).

Residues 98-100 (SGT), 129-132 (HPND), 139-141 (SSN), and Thr-187 contribute to the substrate site. Residues 120–140 (SKKGGKSPVHPNDHVNKGQSS) form a disordered region. Catalysis depends on His-188, which acts as the Proton donor/acceptor. Ser-318 is a catalytic residue. Substrate is bound by residues Ser-319 and 324-326 (KVN).

This sequence belongs to the class-II fumarase/aspartase family. Fumarase subfamily. As to quaternary structure, homotetramer.

It is found in the cytoplasm. The enzyme catalyses (S)-malate = fumarate + H2O. It functions in the pathway carbohydrate metabolism; tricarboxylic acid cycle; (S)-malate from fumarate: step 1/1. Its function is as follows. Involved in the TCA cycle. Catalyzes the stereospecific interconversion of fumarate to L-malate. In Rickettsia felis (strain ATCC VR-1525 / URRWXCal2) (Rickettsia azadi), this protein is Fumarate hydratase class II.